A 319-amino-acid polypeptide reads, in one-letter code: Acetyl-coenzyme A carboxylase carboxyl transferase subunit alpha (319 aa).

The 262-residue stretch at 32 to 293 (NVETEVRALR…KAVLLNELDA (262 aa)) folds into the CoA carboxyltransferase C-terminal domain.

Belongs to the AccA family. In terms of assembly, acetyl-CoA carboxylase is a heterohexamer composed of biotin carboxyl carrier protein (AccB), biotin carboxylase (AccC) and two subunits each of ACCase subunit alpha (AccA) and ACCase subunit beta (AccD).

Its subcellular location is the cytoplasm. It catalyses the reaction N(6)-carboxybiotinyl-L-lysyl-[protein] + acetyl-CoA = N(6)-biotinyl-L-lysyl-[protein] + malonyl-CoA. It functions in the pathway lipid metabolism; malonyl-CoA biosynthesis; malonyl-CoA from acetyl-CoA: step 1/1. In terms of biological role, component of the acetyl coenzyme A carboxylase (ACC) complex. First, biotin carboxylase catalyzes the carboxylation of biotin on its carrier protein (BCCP) and then the CO(2) group is transferred by the carboxyltransferase to acetyl-CoA to form malonyl-CoA. The polypeptide is Acetyl-coenzyme A carboxylase carboxyl transferase subunit alpha (Xanthomonas axonopodis pv. citri (strain 306)).